Reading from the N-terminus, the 214-residue chain is Octanoyltransferase (214 aa).

Residues 29–214 (SETLDEIWVL…QHLQKQLIPS (186 aa)) enclose the BPL/LPL catalytic domain. Residues 69–76 (RGGEITYH), 146–148 (ALG), and 159–161 (GLA) each bind substrate. Cys-177 serves as the catalytic Acyl-thioester intermediate.

It belongs to the LipB family.

It localises to the cytoplasm. The catalysed reaction is octanoyl-[ACP] + L-lysyl-[protein] = N(6)-octanoyl-L-lysyl-[protein] + holo-[ACP] + H(+). Its pathway is protein modification; protein lipoylation via endogenous pathway; protein N(6)-(lipoyl)lysine from octanoyl-[acyl-carrier-protein]: step 1/2. Its function is as follows. Catalyzes the transfer of endogenously produced octanoic acid from octanoyl-acyl-carrier-protein onto the lipoyl domains of lipoate-dependent enzymes. Lipoyl-ACP can also act as a substrate although octanoyl-ACP is likely to be the physiological substrate. This Polynucleobacter necessarius subsp. necessarius (strain STIR1) protein is Octanoyltransferase.